Here is a 349-residue protein sequence, read N- to C-terminus: D-alanine--D-alanine ligase (349 aa).

Residues 140 to 345 (NILFEAMGIP…MKDVFTWLLE (206 aa)) form the ATP-grasp domain. 169 to 224 (NLSFSYPVFIKPTLGGSSVNTGMAKTAEEAMTLVDKIFVTDDRVLVQKLVSGTEVS) contacts ATP. Asp-300, Glu-312, and Asn-314 together coordinate Mg(2+).

The protein belongs to the D-alanine--D-alanine ligase family. It depends on Mg(2+) as a cofactor. The cofactor is Mn(2+).

The protein localises to the cytoplasm. It carries out the reaction 2 D-alanine + ATP = D-alanyl-D-alanine + ADP + phosphate + H(+). It participates in cell wall biogenesis; peptidoglycan biosynthesis. In terms of biological role, cell wall formation. The protein is D-alanine--D-alanine ligase of Leptospira biflexa serovar Patoc (strain Patoc 1 / Ames).